The following is a 388-amino-acid chain: Succinate--CoA ligase [ADP-forming] subunit beta (388 aa).

One can recognise an ATP-grasp domain in the interval 9–244 (KALFAEYGLP…PSQDDAREAH (236 aa)). Residues Lys46, 53-55 (GRG), Glu99, Thr102, and Glu107 contribute to the ATP site. Residues Asn199 and Asp213 each contribute to the Mg(2+) site. Substrate contacts are provided by residues Asn264 and 321–323 (GIV).

Belongs to the succinate/malate CoA ligase beta subunit family. In terms of assembly, heterotetramer of two alpha and two beta subunits. It depends on Mg(2+) as a cofactor.

It carries out the reaction succinate + ATP + CoA = succinyl-CoA + ADP + phosphate. It catalyses the reaction GTP + succinate + CoA = succinyl-CoA + GDP + phosphate. Its pathway is carbohydrate metabolism; tricarboxylic acid cycle; succinate from succinyl-CoA (ligase route): step 1/1. Its function is as follows. Succinyl-CoA synthetase functions in the citric acid cycle (TCA), coupling the hydrolysis of succinyl-CoA to the synthesis of either ATP or GTP and thus represents the only step of substrate-level phosphorylation in the TCA. The beta subunit provides nucleotide specificity of the enzyme and binds the substrate succinate, while the binding sites for coenzyme A and phosphate are found in the alpha subunit. This Shewanella halifaxensis (strain HAW-EB4) protein is Succinate--CoA ligase [ADP-forming] subunit beta.